We begin with the raw amino-acid sequence, 136 residues long: Ribonuclease P protein component (136 aa).

It belongs to the RnpA family. Consists of a catalytic RNA component (M1 or rnpB) and a protein subunit.

It catalyses the reaction Endonucleolytic cleavage of RNA, removing 5'-extranucleotides from tRNA precursor.. RNaseP catalyzes the removal of the 5'-leader sequence from pre-tRNA to produce the mature 5'-terminus. It can also cleave other RNA substrates such as 4.5S RNA. The protein component plays an auxiliary but essential role in vivo by binding to the 5'-leader sequence and broadening the substrate specificity of the ribozyme. This Burkholderia pseudomallei (strain 1106a) protein is Ribonuclease P protein component.